A 499-amino-acid chain; its full sequence is UPF0159 protein Ta1429 (499 aa).

2 consecutive ThyX domains span residues 1 to 246 (MIDR…ALSQ) and 271 to 476 (EKVR…IKFV).

This sequence belongs to the UPF0159 family.

This is UPF0159 protein Ta1429 from Thermoplasma acidophilum (strain ATCC 25905 / DSM 1728 / JCM 9062 / NBRC 15155 / AMRC-C165).